The sequence spans 253 residues: Small ribosomal subunit protein uS3 (253 aa).

The KH type-2 domain occupies 39–107; that stretch reads VRRALKKRLY…EVHLNIVEIR (69 aa). The segment at 215–253 is disordered; it reads LDKRLAGESGPAGEGGGRERGDRPDRGPRRERRGEPSNA. The segment covering 230 to 253 has biased composition (basic and acidic residues); that stretch reads GGRERGDRPDRGPRRERRGEPSNA.

This sequence belongs to the universal ribosomal protein uS3 family. Part of the 30S ribosomal subunit. Forms a tight complex with proteins S10 and S14.

Its function is as follows. Binds the lower part of the 30S subunit head. Binds mRNA in the 70S ribosome, positioning it for translation. This chain is Small ribosomal subunit protein uS3, found in Phenylobacterium zucineum (strain HLK1).